The following is a 468-amino-acid chain: Microtubule-associated tyrosine carboxypeptidase 1 (468 aa).

Residues 1 to 10 (MVLDSGTQVY) show a composition bias toward polar residues. 2 disordered regions span residues 1-39 (MVLD…PPLY) and 77-112 (MKRS…TLRP). A Zn(2+)-binding site is contributed by His-277. The active-site Nucleophile is the Glu-278. The Zn(2+) site is built by His-282 and Glu-313.

Belongs to the peptidase MATCAP family. Requires Zn(2+) as cofactor.

The protein resides in the cytoplasm. The protein localises to the cytoskeleton. It catalyses the reaction C-terminal L-alpha-aminoacyl-L-glutamyl-L-glutamyl-L-tyrosyl-[tubulin] + H2O = C-terminal L-alpha-aminoacyl-L-glutamyl-L-glutamyl-[tubulin] + L-tyrosine. The enzyme catalyses C-terminal L-alpha-aminoacyl-L-glutamyl-L-glutamyl-L-phenylalanyl-[tubulin] + H2O = C-terminal L-alpha-aminoacyl-L-glutamyl-L-glutamyl-[tubulin] + L-phenylalanine. Functionally, tyrosine carboxypeptidase that removes the C-terminal tyrosine residue of alpha-tubulin, thereby regulating microtubule dynamics and function. Also able to remove the C-terminal phenylalanine residue of alpha-tubulin TUBA8. Recognizes adjacent tubulin dimers along the same protofilament. In Rattus norvegicus (Rat), this protein is Microtubule-associated tyrosine carboxypeptidase 1.